Consider the following 132-residue polypeptide: Small ribosomal subunit protein uS8 (132 aa).

In terms of assembly, part of the 30S ribosomal subunit. Contacts proteins S5 and S12. In terms of processing, a modified and unmodified form exist; the nature of the modification(s) is unknown.

Its function is as follows. One of the primary rRNA binding proteins, it binds directly to 16S rRNA central domain where it helps coordinate assembly of the platform of the 30S subunit. This Rhodopseudomonas palustris (strain ATCC BAA-98 / CGA009) protein is Small ribosomal subunit protein uS8.